Here is a 305-residue protein sequence, read N- to C-terminus: uncharacterized protein (305 aa).

A disordered region spans residues 53-185 (SGRIGDGDDG…TGPRSSRTVG (133 aa)). Basic and acidic residues-rich tracts occupy residues 95-116 (VEER…ERPT) and 128-142 (GSER…RSEG). A compositionally biased stretch (polar residues) spans 161-171 (GNTQAPSQSAE). Residues 260–302 (CAICMSNFIKNQRLRVLPCDHRFHVGCVDKWLLGHSNKCPVCR) form an RING-type; atypical zinc finger.

This is an uncharacterized protein from Encephalitozoon cuniculi (strain GB-M1) (Microsporidian parasite).